Here is a 410-residue protein sequence, read N- to C-terminus: Probable peptidoglycan glycosyltransferase FtsW (410 aa).

At 1 to 37 (MRSEERQLNLFGTSVNWSWPNLFKEREAPGMQLYDRA) the chain is on the cytoplasmic side. The helical transmembrane segment at 38–58 (LLFAVLSLICFGFVMVMSASM) threads the bilayer. Topologically, residues 59–69 (PEAQSLTGNPY) are periplasmic. A helical membrane pass occupies residues 70–90 (HFAIRHFAYLVGCAVIAAVVL). Topologically, residues 91 to 99 (RIEMSRWQQ) are cytoplasmic. Residues 100–120 (FSPLLLLIVGIMLVAVLLVGT) traverse the membrane as a helical segment. Residues 121–131 (SVNGATRWLSV) lie on the Periplasmic side of the membrane. A helical membrane pass occupies residues 132 to 154 (GPIRIQVAELAKFAFTIYMAGYL). At 155–163 (VRRHQEIRE) the chain is on the cytoplasmic side. Residues 164–184 (NAKGFYKPIAVFAVYAFLILM) form a helical membrane-spanning segment. The Periplasmic portion of the chain corresponds to 185 to 186 (QP). The helical transmembrane segment at 187-207 (DLGTVVVLFVGTVGLLFLAGA) threads the bilayer. Arginine 208 is a topological domain (cytoplasmic). A helical transmembrane segment spans residues 209–229 (LLDFFALILTGVMAFVALVLL). Residues 230–291 (EPYRMRRVTS…PEAHTDFIFA (62 aa)) lie on the Periplasmic side of the membrane. The chain crosses the membrane as a helical span at residues 292-312 (VIGEELGFIGIVVVLSVLLFV). The Cytoplasmic portion of the chain corresponds to 313 to 336 (ALRAIKLGNLCIEIDKPFEGYLAY). Residues 337 to 357 (AIGIWFCFQTVVNVGASIGML) form a helical membrane-spanning segment. Residues 358 to 364 (PTKGLTL) lie on the Periplasmic side of the membrane. The helical transmembrane segment at 365–385 (PFISYGGSSLWVMTAAAMILI) threads the bilayer. Topologically, residues 386 to 410 (RIDHERRLSSIQAVQGKKVNDNREY) are cytoplasmic.

Belongs to the SEDS family. FtsW subfamily.

Its subcellular location is the cell inner membrane. The catalysed reaction is [GlcNAc-(1-&gt;4)-Mur2Ac(oyl-L-Ala-gamma-D-Glu-L-Lys-D-Ala-D-Ala)](n)-di-trans,octa-cis-undecaprenyl diphosphate + beta-D-GlcNAc-(1-&gt;4)-Mur2Ac(oyl-L-Ala-gamma-D-Glu-L-Lys-D-Ala-D-Ala)-di-trans,octa-cis-undecaprenyl diphosphate = [GlcNAc-(1-&gt;4)-Mur2Ac(oyl-L-Ala-gamma-D-Glu-L-Lys-D-Ala-D-Ala)](n+1)-di-trans,octa-cis-undecaprenyl diphosphate + di-trans,octa-cis-undecaprenyl diphosphate + H(+). The protein operates within cell wall biogenesis; peptidoglycan biosynthesis. In terms of biological role, peptidoglycan polymerase that is essential for cell division. In Shewanella sediminis (strain HAW-EB3), this protein is Probable peptidoglycan glycosyltransferase FtsW.